The primary structure comprises 1101 residues: Lysylphosphatidylglycerol biosynthesis bifunctional protein LysX (1101 aa).

The interval 1 to 601 (MTATRLVRAH…RLHSDGTAPD (601 aa)) is phosphatidylglycerol lysyltransferase. Helical transmembrane passes span 18 to 38 (VPAA…LASV), 60 to 80 (FPDT…ALAA), 84 to 104 (IAWW…VTGL), 113 to 133 (DVGE…LLLA), 151 to 171 (VTLV…LELF), 183 to 200 (YALN…GAFS), and 207 to 227 (VNAL…VVLF). Residues 602–1101 (RIGPVGDGAD…TLPFPLAKPR (500 aa)) form a lysine--tRNA ligase region. Residues 662-740 (VTVSGRVLRA…SVLVTRWRLI (79 aa)) constitute a DNA-binding region (OB). The Mg(2+) site is built by aspartate 1013 and glutamate 1020.

This sequence in the N-terminal section; belongs to the LPG synthetase family. It in the C-terminal section; belongs to the class-II aminoacyl-tRNA synthetase family. Requires Mg(2+) as cofactor.

The protein resides in the cell membrane. It carries out the reaction tRNA(Lys) + L-lysine + ATP = L-lysyl-tRNA(Lys) + AMP + diphosphate. It catalyses the reaction L-lysyl-tRNA(Lys) + a 1,2-diacyl-sn-glycero-3-phospho-(1'-sn-glycerol) = a 1,2-diacyl-sn-glycero-3-phospho-1'-(3'-O-L-lysyl)-sn-glycerol + tRNA(Lys). Its function is as follows. Catalyzes the production of L-lysyl-tRNA(Lys)transfer and the transfer of a lysyl group from L-lysyl-tRNA(Lys) to membrane-bound phosphatidylglycerol (PG), which produces lysylphosphatidylglycerol (LPG), one of the components of the bacterial membrane with a positive net charge. LPG synthesis contributes to the resistance to cationic antimicrobial peptides (CAMPs) and likely protects M.tuberculosis against the CAMPs produced by competiting microorganisms (bacteriocins). In fact, the modification of anionic phosphatidylglycerol with positively charged L-lysine results in repulsion of the peptides. The chain is Lysylphosphatidylglycerol biosynthesis bifunctional protein LysX (lysX) from Mycolicibacterium gilvum (strain PYR-GCK) (Mycobacterium gilvum (strain PYR-GCK)).